A 178-amino-acid polypeptide reads, in one-letter code: NADH-quinone oxidoreductase subunit I 2 (178 aa).

2 consecutive 4Fe-4S ferredoxin-type domains span residues 46 to 78 (IVLT…MQAA) and 88 to 117 (AWFR…LTPF). Cysteine 58, cysteine 61, cysteine 64, cysteine 68, cysteine 97, cysteine 100, cysteine 103, and cysteine 107 together coordinate [4Fe-4S] cluster.

The protein belongs to the complex I 23 kDa subunit family. As to quaternary structure, NDH-1 is composed of 14 different subunits. Subunits NuoA, H, J, K, L, M, N constitute the membrane sector of the complex. [4Fe-4S] cluster serves as cofactor.

It is found in the cell inner membrane. It catalyses the reaction a quinone + NADH + 5 H(+)(in) = a quinol + NAD(+) + 4 H(+)(out). Functionally, NDH-1 shuttles electrons from NADH, via FMN and iron-sulfur (Fe-S) centers, to quinones in the respiratory chain. The immediate electron acceptor for the enzyme in this species is believed to be ubiquinone. Couples the redox reaction to proton translocation (for every two electrons transferred, four hydrogen ions are translocated across the cytoplasmic membrane), and thus conserves the redox energy in a proton gradient. This chain is NADH-quinone oxidoreductase subunit I 2, found in Syntrophobacter fumaroxidans (strain DSM 10017 / MPOB).